The chain runs to 471 residues: UDP-N-acetylmuramate--L-alanine ligase (471 aa).

ATP is bound at residue 114–120 (GTHGKTT).

The protein belongs to the MurCDEF family.

It is found in the cytoplasm. The enzyme catalyses UDP-N-acetyl-alpha-D-muramate + L-alanine + ATP = UDP-N-acetyl-alpha-D-muramoyl-L-alanine + ADP + phosphate + H(+). It participates in cell wall biogenesis; peptidoglycan biosynthesis. In terms of biological role, cell wall formation. This is UDP-N-acetylmuramate--L-alanine ligase from Rhizobium johnstonii (strain DSM 114642 / LMG 32736 / 3841) (Rhizobium leguminosarum bv. viciae).